Reading from the N-terminus, the 196-residue chain is GTP cyclohydrolase-2 (196 aa).

49 to 53 (RVHSE) is a binding site for GTP. Zn(2+) contacts are provided by Cys54, Cys65, and Cys67. GTP contacts are provided by residues Gln70, 92-94 (EGR), and Thr114. The Proton acceptor role is filled by Asp126. Arg128 serves as the catalytic Nucleophile. Positions 149 and 154 each coordinate GTP.

The protein belongs to the GTP cyclohydrolase II family. In terms of assembly, homodimer. Requires Zn(2+) as cofactor.

It catalyses the reaction GTP + 4 H2O = 2,5-diamino-6-hydroxy-4-(5-phosphoribosylamino)-pyrimidine + formate + 2 phosphate + 3 H(+). Its pathway is cofactor biosynthesis; riboflavin biosynthesis; 5-amino-6-(D-ribitylamino)uracil from GTP: step 1/4. Its function is as follows. Catalyzes the conversion of GTP to 2,5-diamino-6-ribosylamino-4(3H)-pyrimidinone 5'-phosphate (DARP), formate and pyrophosphate. The polypeptide is GTP cyclohydrolase-2 (Escherichia coli O127:H6 (strain E2348/69 / EPEC)).